The following is a 158-amino-acid chain: SsrA-binding protein (158 aa).

Residues 131 to 158 (YDKRQTLRERQDKREADRAMSSHRRLGE) form a disordered region.

Belongs to the SmpB family.

The protein resides in the cytoplasm. Its function is as follows. Required for rescue of stalled ribosomes mediated by trans-translation. Binds to transfer-messenger RNA (tmRNA), required for stable association of tmRNA with ribosomes. tmRNA and SmpB together mimic tRNA shape, replacing the anticodon stem-loop with SmpB. tmRNA is encoded by the ssrA gene; the 2 termini fold to resemble tRNA(Ala) and it encodes a 'tag peptide', a short internal open reading frame. During trans-translation Ala-aminoacylated tmRNA acts like a tRNA, entering the A-site of stalled ribosomes, displacing the stalled mRNA. The ribosome then switches to translate the ORF on the tmRNA; the nascent peptide is terminated with the 'tag peptide' encoded by the tmRNA and targeted for degradation. The ribosome is freed to recommence translation, which seems to be the essential function of trans-translation. The sequence is that of SsrA-binding protein from Clavibacter michiganensis subsp. michiganensis (strain NCPPB 382).